Here is a 125-residue protein sequence, read N- to C-terminus: SOSS complex subunit C homolog A (125 aa).

The span at 1–16 shows a compositional bias: polar residues; it reads MAFPNTSAQQAETNSK. Disordered regions lie at residues 1-20, 38-74, and 105-125; these read MAFP…SLEE, SNTN…AAFN, and PATP…NNPK.

It belongs to the SOSS-C family.

This chain is SOSS complex subunit C homolog A, found in Drosophila willistoni (Fruit fly).